Here is a 131-residue protein sequence, read N- to C-terminus: Large ribosomal subunit protein uL22 (131 aa).

A compositionally biased stretch (basic residues) spans 1 to 11 (MAKGHRSKIKR). The segment at 1-20 (MAKGHRSKIKRERNEVRDTR) is disordered.

This sequence belongs to the universal ribosomal protein uL22 family. As to quaternary structure, part of the 50S ribosomal subunit.

Its function is as follows. This protein binds specifically to 23S rRNA; its binding is stimulated by other ribosomal proteins, e.g. L4, L17, and L20. It is important during the early stages of 50S assembly. It makes multiple contacts with different domains of the 23S rRNA in the assembled 50S subunit and ribosome. In terms of biological role, the globular domain of the protein is located near the polypeptide exit tunnel on the outside of the subunit, while an extended beta-hairpin is found that lines the wall of the exit tunnel in the center of the 70S ribosome. This is Large ribosomal subunit protein uL22 from Agathobacter rectalis (strain ATCC 33656 / DSM 3377 / JCM 17463 / KCTC 5835 / VPI 0990) (Eubacterium rectale).